Consider the following 195-residue polypeptide: Thioredoxin reductase-like selenoprotein T (195 aa).

Residues 1 to 19 form the signal peptide; it reads MRLLLLLLVAASAMVRSEA. A cross-link (cysteinyl-selenocysteine (Cys-Sec)) is located at residues 46-49; that stretch reads CVSU. Position 49 (Sec-49) is a non-standard amino acid, selenocysteine. The chain crosses the membrane as a helical span at residues 85 to 103; sequence IASFLSVFKLVLIGLIIVG.

This sequence belongs to the SelWTH family. Selenoprotein T subfamily. May contain a selenide-sulfide bond between Cys-46 and Sec-49. This bond is speculated to serve as redox-active pair. Ubiquitous. Highly expressed in the endocrine pancreas.

It localises to the endoplasmic reticulum membrane. The enzyme catalyses [thioredoxin]-dithiol + NADP(+) = [thioredoxin]-disulfide + NADPH + H(+). Its function is as follows. Selenoprotein with thioredoxin reductase-like oxidoreductase activity. Protects dopaminergic neurons against oxidative stress and cell death. Involved in ADCYAP1/PACAP-induced calcium mobilization and neuroendocrine secretion. Plays a role in fibroblast anchorage and redox regulation. In gastric smooth muscle, modulates the contraction processes through the regulation of calcium release and MYLK activation. In pancreatic islets, involved in the control of glucose homeostasis, contributes to prolonged ADCYAP1/PACAP-induced insulin secretion. This is Thioredoxin reductase-like selenoprotein T from Homo sapiens (Human).